Consider the following 151-residue polypeptide: Large ribosomal subunit protein uL15 (151 aa).

The interval 1–58 (MELNQLKSVPKARNHKTKTLGRGHGSGLGKTSGRGQKGQKARKSGLTRPGFEGGQTPL) is disordered. Residues 10-21 (PKARNHKTKTLG) show a composition bias toward basic residues. Over residues 22–36 (RGHGSGLGKTSGRGQ) the composition is skewed to gly residues.

The protein belongs to the universal ribosomal protein uL15 family. Part of the 50S ribosomal subunit.

Its function is as follows. Binds to the 23S rRNA. This chain is Large ribosomal subunit protein uL15, found in Mycoplasma pneumoniae (strain ATCC 29342 / M129 / Subtype 1) (Mycoplasmoides pneumoniae).